Here is a 155-residue protein sequence, read N- to C-terminus: 6,7-dimethyl-8-ribityllumazine synthase (155 aa).

Residues Trp-24, 58-60 (AFE), and 82-84 (AVI) contribute to the 5-amino-6-(D-ribitylamino)uracil site. 87–88 (GT) provides a ligand contact to (2S)-2-hydroxy-3-oxobutyl phosphate. The active-site Proton donor is His-90. Phe-115 serves as a coordination point for 5-amino-6-(D-ribitylamino)uracil. Arg-129 serves as a coordination point for (2S)-2-hydroxy-3-oxobutyl phosphate.

It belongs to the DMRL synthase family. In terms of assembly, forms an icosahedral capsid composed of 60 subunits, arranged as a dodecamer of pentamers.

It catalyses the reaction (2S)-2-hydroxy-3-oxobutyl phosphate + 5-amino-6-(D-ribitylamino)uracil = 6,7-dimethyl-8-(1-D-ribityl)lumazine + phosphate + 2 H2O + H(+). It participates in cofactor biosynthesis; riboflavin biosynthesis; riboflavin from 2-hydroxy-3-oxobutyl phosphate and 5-amino-6-(D-ribitylamino)uracil: step 1/2. Catalyzes the formation of 6,7-dimethyl-8-ribityllumazine by condensation of 5-amino-6-(D-ribitylamino)uracil with 3,4-dihydroxy-2-butanone 4-phosphate. This is the penultimate step in the biosynthesis of riboflavin. The polypeptide is 6,7-dimethyl-8-ribityllumazine synthase (Saccharophagus degradans (strain 2-40 / ATCC 43961 / DSM 17024)).